A 620-amino-acid chain; its full sequence is MGKVIGIDLGTTNSAMAVYEGNEAKIIANKEGKNTTPSIVAFTDKGEILVGESAKRQAVTNPEKTIYSIKRIMGLMFNEDKAKEAEKRLPYKIVDRNGACAIEISGKVYTPQEISAKILMKLKEDAESYLGESVTEAVITVPAYFNDSQRKATKEAGTIAGLNVLRIINEPTSAALAYGLDKKESEKIMVYDLGGGTFDVTVLETGDNVVEVLATGGDAFLGGDDFDNRVIDFLASEFKSETGIEIKNDVMALQRLKEAAENAKKELSSAMETEINLPFITADATGPKHLVKKLTRAKFESLTEDLMKETISKIESVIKDAGLTKNEISEVVMVGGSTRIPKVQERVKAFINKDLNKSVNPDEVVAVGASIQGGVLKGDVKDVLLLDVTPLSLGIETLGGVMTKVIDRGTTIPAKKSQVFSTAEDNQPAVSIMVLQGERELARDNKSLGKFDLQGIAPAPRGVPQIEVTFDIDANGILTVSAQDKNTGKSQEIKISGSSGLSDSEIEKMVKDAELHKEEDAKKKEVIEARNHADSLAHQTQKSLDEHKTNLNENDANEIQNAINALKDCVKNDNATKAELEDKTKLLAQAAQKLGEAMANKNNAEQPKKKDDDVIDAEVE.

Phosphothreonine; by autocatalysis is present on T197. Residues 597-620 (AMANKNNAEQPKKKDDDVIDAEVE) are disordered.

Belongs to the heat shock protein 70 family.

Functionally, acts as a chaperone. This is Chaperone protein DnaK (dnaK) from Helicobacter pylori (strain ATCC 700392 / 26695) (Campylobacter pylori).